We begin with the raw amino-acid sequence, 940 residues long: Reticulon-3 (940 aa).

Over residues methionine 1 to threonine 24 the composition is skewed to low complexity. Disordered stretches follow at residues methionine 1 to proline 32, serine 71 to histidine 91, and aspartate 129 to leucine 182. Alanine 2 is subject to N-acetylalanine. Topologically, residues alanine 2–threonine 771 are cytoplasmic. Serine 31 is subject to Phosphoserine. 6 positions are modified to phosphoserine: serine 196, serine 204, serine 209, serine 212, serine 249, and serine 282. Disordered regions lie at residues alanine 314–histidine 335, lysine 381–serine 405, and glutamate 428–glutamine 512. Over residues threonine 430–threonine 447 the composition is skewed to acidic residues. Residues threonine 472 to methionine 490 are compositionally biased toward basic and acidic residues. Polar residues predominate over residues tyrosine 491–glutamine 512. Serine 508 is subject to Phosphoserine. Threonine 572 carries the post-translational modification Phosphothreonine. 3 positions are modified to phosphoserine: serine 575, serine 576, and serine 652. 2 disordered regions span residues asparagine 623–leucine 655 and glutamine 672–leucine 701. Residues aspartate 689–aspartate 699 show a composition bias toward polar residues. Residues valine 752–glutamate 940 enclose the Reticulon domain. Residues leucine 772 to leucine 795 constitute an intramembrane region (helical). At serine 796–leucine 852 the chain is on the cytoplasmic side. Residues isoleucine 853–methionine 875 constitute an intramembrane region (helical). Over threonine 876–glycine 879 the chain is Cytoplasmic. Positions alanine 880 to tyrosine 902 form an intramembrane region, helical. The tract at residues valine 895–glutamate 940 is interaction with FADD. Over glutamate 903–glutamate 940 the chain is Cytoplasmic. Positions glutamine 908 to aspartate 910 are interaction with BACE1.

As to quaternary structure, homodimer. Interacts with RTN4. Isoform 2 interacts with BACE1, BACE2, BCL2 and FADD. Interacts with ATL2. Interacts with TMEM33. Interacts with ATL1. Interacts with ZFYVE27 and with KIF5A in a ZFYVE27-dependent manner. Interacts with RIGI. Interacts with TRIM25. Present in olfactory bulb, olfactory epithelium and retina (at protein level).

Its subcellular location is the endoplasmic reticulum membrane. It localises to the golgi apparatus membrane. Its function is as follows. May be involved in membrane trafficking in the early secretory pathway. Inhibits BACE1 activity and amyloid precursor protein processing. May induce caspase-8 cascade and apoptosis. May favor BCL2 translocation to the mitochondria upon endoplasmic reticulum stress. Induces the formation of endoplasmic reticulum tubules. Acts also as an inflammation-resolving regulator by interacting with both TRIM25 and RIGI, subsequently impairing RIGI 'Lys-63'-linked polyubiquitination leading to IRF3 and NF-kappa-B inhibition. The polypeptide is Reticulon-3 (Rtn3) (Rattus norvegicus (Rat)).